Reading from the N-terminus, the 230-residue chain is uncharacterized protein (230 aa).

The helical transmembrane segment at 7–23 (LFTASILSLGYLVFICG) threads the bilayer. The segment at 27 to 230 (KPKPTASTES…VKTEGTLKKN (204 aa)) is disordered. Over residues 50–59 (AVPQKPAAPA) the composition is skewed to low complexity. The span at 60 to 83 (AEEKAPVDPKDPKSKDVDEAKKPD) shows a compositional bias: basic and acidic residues. Basic residues predominate over residues 101 to 112 (KKSKKSEKSKKK). Basic and acidic residues predominate over residues 113-173 (KTEEKVMSED…KEKSKDETVP (61 aa)). The span at 199-210 (ETDEFPTIDEDA) shows a compositional bias: acidic residues. A compositionally biased stretch (basic and acidic residues) spans 211 to 230 (EKTKKTEKKDVKTEGTLKKN).

It localises to the membrane. This is an uncharacterized protein from Caenorhabditis elegans.